Consider the following 640-residue polypeptide: Probable potassium transport system protein Kup 3 (640 aa).

Residues 1–15 (MTVDAAATPAEAPAT) show a composition bias toward low complexity. The disordered stretch occupies residues 1–20 (MTVDAAATPAEAPATNGHGD). The next 12 helical transmembrane spans lie at 30–50 (LTLG…LYAL), 71–91 (VISL…VVIL), 117–137 (ASII…DAVI), 155–175 (AAFD…LFAV), 183–203 (VAAF…IAAF), 224–244 (FMLH…LAVT), 265–285 (WLFV…ALII), 294–314 (PFFL…ATVA), 363–383 (LLLA…ALAS), 385–405 (YGIS…VVIW), 410–430 (WSPL…LTFL), and 437–457 (VLEG…LMYT).

This sequence belongs to the HAK/KUP transporter (TC 2.A.72) family.

Its subcellular location is the cell inner membrane. The catalysed reaction is K(+)(in) + H(+)(in) = K(+)(out) + H(+)(out). Functionally, transport of potassium into the cell. Likely operates as a K(+):H(+) symporter. The protein is Probable potassium transport system protein Kup 3 of Bradyrhizobium sp. (strain BTAi1 / ATCC BAA-1182).